The sequence spans 180 residues: ADP-ribosylation factor 4 (180 aa).

Residue Gly-2 is the site of N-myristoyl glycine attachment. Residues Gly-24 to Thr-31, Asp-67 to Gln-71, and Asn-126 to Asp-129 each bind GTP.

Belongs to the small GTPase superfamily. Arf family.

It localises to the golgi apparatus. Functionally, GTP-binding protein involved in protein trafficking; may modulate vesicle budding and uncoating within the Golgi apparatus. May be involved in ciliogenesis. The chain is ADP-ribosylation factor 4 (arf4) from Xenopus laevis (African clawed frog).